A 339-amino-acid chain; its full sequence is N-acetyl-gamma-glutamyl-phosphate reductase (339 aa).

Cys144 is a catalytic residue.

The protein belongs to the NAGSA dehydrogenase family. Type 1 subfamily.

The protein localises to the cytoplasm. It carries out the reaction N-acetyl-L-glutamate 5-semialdehyde + phosphate + NADP(+) = N-acetyl-L-glutamyl 5-phosphate + NADPH + H(+). Its pathway is amino-acid biosynthesis; L-arginine biosynthesis; N(2)-acetyl-L-ornithine from L-glutamate: step 3/4. Functionally, catalyzes the NADPH-dependent reduction of N-acetyl-5-glutamyl phosphate to yield N-acetyl-L-glutamate 5-semialdehyde. In Methanobrevibacter smithii (strain ATCC 35061 / DSM 861 / OCM 144 / PS), this protein is N-acetyl-gamma-glutamyl-phosphate reductase.